A 151-amino-acid chain; its full sequence is Ribosome maturation factor RimP (151 aa).

Belongs to the RimP family.

It localises to the cytoplasm. Required for maturation of 30S ribosomal subunits. In Aliivibrio fischeri (strain ATCC 700601 / ES114) (Vibrio fischeri), this protein is Ribosome maturation factor RimP.